We begin with the raw amino-acid sequence, 106 residues long: MGGPTRRHQEEGSAECLGGPSTRAAPGPGLRDFHFTTAGPSKADRLGDAAQIHRERMRPVQCGDGSGERVFLQSPGSIGTLYIRLDLNSQRSTCCCLLNAGTKGMC.

Positions methionine 1–aspartate 44 are disordered. Residues isoleucine 78–leucine 87 carry the Nuclear export signal motif. The residue at position 93 (threonine 93) is a Phosphothreonine; by PKA.

In terms of assembly, interacts with FOXO1 (via N-terminal domain); the interaction is direct, occurs in a forskolin-independent manner that prevents SIRT1 binding to FOXO1. Interacts with FOXO3. Does not interact with FOXO4. In terms of processing, phosphorylated at Thr-93 by PKA, leading to import into the nucleus. In terms of tissue distribution, expressed in adipocytes. Expressed in brown and white adipose tissue but not in liver. Protein levels in brown and white adipose tissues decrease following fasting (at protein level). Expressed in white and brown adipose tissues. Expressed in adipocytes. Not expressed in liver, skeletal muscle and brain.

Its subcellular location is the cytoplasm. The protein localises to the cytosol. It is found in the nucleus. Its function is as follows. Regulator of adipocytes that acts by repressing FOXO1 transcriptional activity. Acts by promoting acetylation of FOXO1, both by preventing the interaction between FOXO1 and SIRT1 deacetylase, and by mediating acetyltransferase activity in vitro. Regulates insulin sensitivity and energy metabolism. This is Foxo1-corepressor (Fcor) from Mus musculus (Mouse).